The chain runs to 120 residues: Non-specific lipid-transfer protein 2 (120 aa).

A signal peptide spans 1-25 (MATSMKLACVALVMCMVVIAPMAEA). Intrachain disulfides connect cysteine 29–cysteine 78, cysteine 39–cysteine 55, cysteine 56–cysteine 101, and cysteine 76–cysteine 115.

This sequence belongs to the plant LTP family. In terms of tissue distribution, expressed in roots, stem, leaves and tendrils of the mature plant.

Plant non-specific lipid-transfer proteins transfer phospholipids as well as galactolipids across membranes. May play a role in wax or cutin deposition in the cell walls of expanding epidermal cells and certain secretory tissues. This Pisum sativum (Garden pea) protein is Non-specific lipid-transfer protein 2.